The sequence spans 20 residues: Short cationic peptide-4b (20 aa).

A Glutamic acid 1-amide modification is found at E20.

Expressed by the venom gland.

It is found in the secreted. This is Short cationic peptide-4b from Cupiennius salei (American wandering spider).